A 275-amino-acid chain; its full sequence is Release factor glutamine methyltransferase (275 aa).

Residues 114-118 (GTGSG), aspartate 137, tryptophan 165, and asparagine 180 contribute to the S-adenosyl-L-methionine site. Position 180 to 183 (180 to 183 (NPPY)) interacts with substrate.

It belongs to the protein N5-glutamine methyltransferase family. PrmC subfamily.

The catalysed reaction is L-glutaminyl-[peptide chain release factor] + S-adenosyl-L-methionine = N(5)-methyl-L-glutaminyl-[peptide chain release factor] + S-adenosyl-L-homocysteine + H(+). Methylates the class 1 translation termination release factors RF1/PrfA and RF2/PrfB on the glutamine residue of the universally conserved GGQ motif. The polypeptide is Release factor glutamine methyltransferase (Xylella fastidiosa (strain Temecula1 / ATCC 700964)).